Consider the following 335-residue polypeptide: Methionine import ATP-binding protein MetN (335 aa).

The ABC transporter domain occupies 2 to 241 (IQFQRLHKSY…PKHATTRRFV (240 aa)). 38–45 (GHSGAGKS) is a binding site for ATP.

The protein belongs to the ABC transporter superfamily. Methionine importer (TC 3.A.1.24) family. As to quaternary structure, the complex is composed of two ATP-binding proteins (MetN), two transmembrane proteins (MetI) and a solute-binding protein (MetQ).

It is found in the cell inner membrane. The catalysed reaction is L-methionine(out) + ATP + H2O = L-methionine(in) + ADP + phosphate + H(+). It carries out the reaction D-methionine(out) + ATP + H2O = D-methionine(in) + ADP + phosphate + H(+). Its function is as follows. Part of the ABC transporter complex MetNIQ involved in methionine import. Responsible for energy coupling to the transport system. In Xanthomonas axonopodis pv. citri (strain 306), this protein is Methionine import ATP-binding protein MetN.